The sequence spans 594 residues: Potassium-transporting ATPase potassium-binding subunit (594 aa).

12 helical membrane passes run 4–24 (QFFGLLVFYLAILLILAPFLG), 65–85 (QYAVAVLIFSVLGFIAVYALQ), 136–156 (ALTVQNFLSAAVGMSVLFALI), 179–199 (LYVLLPLALALALALVSQGVI), 287–307 (LEMLAILIIPAALCFTFGEMV), 314–334 (VAILAAMTLLFVGLAWLTQNA), 361–381 (FGVAASALFAVVTTAASCGAV), 390–410 (AMGGLGPMLLMQLGEVVFGGV), 413–433 (GLYGMLAFALLGVFIAGLMIG), 450–470 (MVSIAILVTPFLVLAGTALAV), 518–538 (LLGLAMWFGRFLVIVAILALA), and 560–580 (LFIVLLIGTVLLVGALTYVPA).

Belongs to the KdpA family. As to quaternary structure, the system is composed of three essential subunits: KdpA, KdpB and KdpC.

The protein localises to the cell inner membrane. Functionally, part of the high-affinity ATP-driven potassium transport (or Kdp) system, which catalyzes the hydrolysis of ATP coupled with the electrogenic transport of potassium into the cytoplasm. This subunit binds the periplasmic potassium ions and delivers the ions to the membrane domain of KdpB through an intramembrane tunnel. The chain is Potassium-transporting ATPase potassium-binding subunit from Bordetella avium (strain 197N).